The following is a 555-amino-acid chain: 4-coumarate--CoA ligase-like 9 (555 aa).

Serine 200, serine 201, glycine 202, threonine 203, threonine 204, and lysine 208 together coordinate ATP. Tyrosine 248 contacts (E)-4-coumaroyl-AMP. Arginine 269 is a CoA binding site. The segment at 271-342 (DLRTFLRALV…RKFPGVQVEE (72 aa)) is SBD1. Residue alanine 320 participates in (E)-4-coumaroyl-AMP binding. ATP contacts are provided by glutamate 342, alanine 343, threonine 347, aspartate 431, and arginine 446. 2 residues coordinate (E)-4-coumaroyl-AMP: alanine 343 and threonine 347. The interval 343-410 (AYGLTEHSCI…VRSQSVMQGY (68 aa)) is SBD2. Lysine 448 and lysine 452 together coordinate (E)-4-coumaroyl-AMP. CoA contacts are provided by lysine 454 and glycine 455. Lysine 537 contributes to the ATP binding site.

It belongs to the ATP-dependent AMP-binding enzyme family. Interacts with STS1. Mg(2+) serves as cofactor.

The enzyme catalyses (E)-4-coumarate + ATP + CoA = (E)-4-coumaroyl-CoA + AMP + diphosphate. It catalyses the reaction (E)-4-coumarate + ATP + H(+) = (E)-4-coumaroyl-AMP + diphosphate. The catalysed reaction is (E)-4-coumaroyl-AMP + CoA = (E)-4-coumaroyl-CoA + AMP + H(+). In terms of biological role, carboxylate--CoA ligase that may use 4-coumarate as substrate. Follows a two-step reaction mechanism, wherein the carboxylate substrate first undergoes adenylation by ATP, followed by a thioesterification in the presence of CoA to yield the final CoA thioester. In Oryza sativa subsp. japonica (Rice), this protein is 4-coumarate--CoA ligase-like 9 (4CLL9).